The sequence spans 781 residues: AP-3 complex subunit beta (781 aa).

5 HEAT repeats span residues 113 to 151 (PNLA…ASLY), 153 to 186 (IILH…EQGI), 187 to 224 (SIKD…QELQ), 294 to 332 (DHDL…PKTF), and 521 to 559 (PRIC…HDVD). Disordered stretches follow at residues 694–713 (KPKR…TSSH) and 731–781 (ARQS…ETTE). Polar residues predominate over residues 699-712 (ASVSSVPSNTFTSS). Residues 746–758 (STSEETDHTDDES) are compositionally biased toward acidic residues. Positions 759–774 (GSSSGDESTESSYVSS) are enriched in low complexity.

This sequence belongs to the adaptor complexes large subunit family. In terms of assembly, adaptor protein complex 3 (AP-3) is a heterotetramer composed of 2 large adaptins (APL5 and APL6), a medium adaptin (APM3) and a small adaptin (APS3).

It is found in the golgi apparatus. The protein resides in the cytoplasmic vesicle. Its subcellular location is the clathrin-coated vesicle membrane. Part of the AP-3 complex, an adaptor-related complex which is not clathrin-associated. The complex is associated with the Golgi region as well as more peripheral structures. It facilitates the budding of vesicles from the Golgi membrane and may be directly involved in trafficking to the vacuole. This Eremothecium gossypii (strain ATCC 10895 / CBS 109.51 / FGSC 9923 / NRRL Y-1056) (Yeast) protein is AP-3 complex subunit beta (APL6).